Here is a 354-residue protein sequence, read N- to C-terminus: Methylthioribose-1-phosphate isomerase (354 aa).

Residues arginine 48–alanine 50, arginine 95, and glutamine 202 contribute to the substrate site. Catalysis depends on aspartate 243, which acts as the Proton donor. Asparagine 253 to lysine 254 contributes to the substrate binding site.

This sequence belongs to the eIF-2B alpha/beta/delta subunits family. MtnA subfamily.

The enzyme catalyses 5-(methylsulfanyl)-alpha-D-ribose 1-phosphate = 5-(methylsulfanyl)-D-ribulose 1-phosphate. Its pathway is amino-acid biosynthesis; L-methionine biosynthesis via salvage pathway; L-methionine from S-methyl-5-thio-alpha-D-ribose 1-phosphate: step 1/6. In terms of biological role, catalyzes the interconversion of methylthioribose-1-phosphate (MTR-1-P) into methylthioribulose-1-phosphate (MTRu-1-P). This Roseiflexus castenholzii (strain DSM 13941 / HLO8) protein is Methylthioribose-1-phosphate isomerase.